Reading from the N-terminus, the 302-residue chain is Giardin subunit alpha-5 (302 aa).

4 Annexin repeats span residues 1 to 72 (MTST…VNMW), 74 to 144 (SRHE…VAGW), 153 to 226 (GSVE…AAHF), and 230 to 298 (GLPV…TLWR).

The protein belongs to the annexin family. Giardin subunit alpha subfamily.

It is found in the cytoplasm. It localises to the cytoskeleton. Giardins are involved in parasite attachment to the intestinal mucosa and in the cytoskeletal disassembly and reassembly that marks the transition from infectious trophozoite to transmissible cyst. They may interact with other cytoskeletal proteins such as microtubules in the microribbons or crossbridges, to maintain the integrity of the ventral disk. In Giardia intestinalis (Giardia lamblia), this protein is Giardin subunit alpha-5.